The primary structure comprises 937 residues: Translation initiation factor IF-2 (937 aa).

Disordered stretches follow at residues 157–230 (KEAQ…AARK) and 250–346 (IKAP…ESNF). Residues 173–205 (EAQKADAAKPVEAKADESAQEEKKRVAAEESKK) are compositionally biased toward basic and acidic residues. Residues 252-265 (APEPAAPVAAKPAE) show a composition bias toward low complexity. The span at 267–293 (TLHKPADKKAGEKKDEKKPAVTADKKS) shows a compositional bias: basic and acidic residues. A compositionally biased stretch (polar residues) spans 295 to 304 (KSANVSSTWQ). The region spanning 437–606 (PRAPVVTVMG…LLQAEVLELK (170 aa)) is the tr-type G domain. A G1 region spans residues 446 to 453 (GHVDHGKT). 446–453 (GHVDHGKT) is a binding site for GTP. Residues 471-475 (GITQH) are G2. Residues 492–495 (DTPG) form a G3 region. GTP contacts are provided by residues 492–496 (DTPGH) and 546–549 (NKID). The segment at 546-549 (NKID) is G4. The tract at residues 582 to 584 (SAK) is G5.

This sequence belongs to the TRAFAC class translation factor GTPase superfamily. Classic translation factor GTPase family. IF-2 subfamily.

It localises to the cytoplasm. Its function is as follows. One of the essential components for the initiation of protein synthesis. Protects formylmethionyl-tRNA from spontaneous hydrolysis and promotes its binding to the 30S ribosomal subunits. Also involved in the hydrolysis of GTP during the formation of the 70S ribosomal complex. The chain is Translation initiation factor IF-2 from Janthinobacterium sp. (strain Marseille) (Minibacterium massiliensis).